A 633-amino-acid chain; its full sequence is Chaperone protein HtpG (633 aa).

Residues 1–341 (MSATSSKETL…SADLPLNVSR (341 aa)) form an a; substrate-binding region. The segment at 342–558 (EILQSSRDID…EGDMSANLER (217 aa)) is b. Residues 559 to 633 (LLKAAGQAAP…LNGLLAMLPG (75 aa)) form a c region.

This sequence belongs to the heat shock protein 90 family. Homodimer.

It is found in the cytoplasm. Functionally, molecular chaperone. Has ATPase activity. The sequence is that of Chaperone protein HtpG from Thiobacillus denitrificans (strain ATCC 25259 / T1).